We begin with the raw amino-acid sequence, 242 residues long: Phosphoribosylaminoimidazole-succinocarboxamide synthase (242 aa).

Belongs to the SAICAR synthetase family.

It carries out the reaction 5-amino-1-(5-phospho-D-ribosyl)imidazole-4-carboxylate + L-aspartate + ATP = (2S)-2-[5-amino-1-(5-phospho-beta-D-ribosyl)imidazole-4-carboxamido]succinate + ADP + phosphate + 2 H(+). It functions in the pathway purine metabolism; IMP biosynthesis via de novo pathway; 5-amino-1-(5-phospho-D-ribosyl)imidazole-4-carboxamide from 5-amino-1-(5-phospho-D-ribosyl)imidazole-4-carboxylate: step 1/2. This chain is Phosphoribosylaminoimidazole-succinocarboxamide synthase, found in Prochlorococcus marinus (strain MIT 9303).